The chain runs to 263 residues: LIM and SH3 domain protein 1 (263 aa).

Residue Met1 is modified to N-acetylmethionine. An LIM zinc-binding domain is found at 5–56; sequence CARCGKIVYPTEKVNCLDKYWHKACFHCETCKMTLNMKNYKGYEKKPYCNAH. An N6-acetyllysine modification is found at Lys42. Nebulin repeat units lie at residues 61-95 and 97-131; these read SFTM…KNKG and GFSV…KSRM. Thr68 is modified (phosphothreonine). Residue Lys75 is modified to N6-methyllysine. Residue Ser99 is modified to Phosphoserine. Thr104 is modified (phosphothreonine). Lys112 carries the N6-succinyllysine modification. Ser118 and Ser134 each carry phosphoserine. The tract at residues 123 to 207 is disordered; the sequence is HEEFEKSRMG…QRSAPGGGGK (85 aa). Positions 148–162 are enriched in polar residues; it reads DSSSYRRPTEQQQPQ. Thr156 is modified (phosphothreonine; by PKA). The SH3 domain occupies 204–263; that stretch reads GGGKRYRAVYDYSAADEDEVSFQDGDTIVNVQQIDDGWMYGTVERTGDTGMLPANYVEAI.

In terms of assembly, interacts with F-actin. Interacts with KBTBD10. Interacts with ANKRD54.

It is found in the cytoplasm. Its subcellular location is the cell cortex. It localises to the cytoskeleton. Its function is as follows. Plays an important role in the regulation of dynamic actin-based, cytoskeletal activities. Agonist-dependent changes in LASP1 phosphorylation may also serve to regulate actin-associated ion transport activities, not only in the parietal cell but also in certain other F-actin-rich secretory epithelial cell types. The polypeptide is LIM and SH3 domain protein 1 (Lasp1) (Mus musculus (Mouse)).